The chain runs to 154 residues: Xanthine-guanine phosphoribosyltransferase (154 aa).

5-phospho-alpha-D-ribose 1-diphosphate-binding positions include 37–38 (RG), Arg69, and 88–96 (EDLVDSGDT). Arg69 provides a ligand contact to GMP. Asp89 lines the Mg(2+) pocket. Guanine is bound by residues Asp92 and Ile135. 2 residues coordinate xanthine: Asp92 and Ile135. GMP is bound by residues 92 to 96 (DSGDT) and 134 to 135 (WI).

It belongs to the purine/pyrimidine phosphoribosyltransferase family. XGPT subfamily. Homotetramer. Mg(2+) is required as a cofactor.

The protein resides in the cell inner membrane. The catalysed reaction is GMP + diphosphate = guanine + 5-phospho-alpha-D-ribose 1-diphosphate. It carries out the reaction XMP + diphosphate = xanthine + 5-phospho-alpha-D-ribose 1-diphosphate. It catalyses the reaction IMP + diphosphate = hypoxanthine + 5-phospho-alpha-D-ribose 1-diphosphate. It functions in the pathway purine metabolism; GMP biosynthesis via salvage pathway; GMP from guanine: step 1/1. It participates in purine metabolism; XMP biosynthesis via salvage pathway; XMP from xanthine: step 1/1. In terms of biological role, purine salvage pathway enzyme that catalyzes the transfer of the ribosyl-5-phosphate group from 5-phospho-alpha-D-ribose 1-diphosphate (PRPP) to the N9 position of the 6-oxopurines guanine and xanthine to form the corresponding ribonucleotides GMP (guanosine 5'-monophosphate) and XMP (xanthosine 5'-monophosphate), with the release of PPi. To a lesser extent, also acts on hypoxanthine. This chain is Xanthine-guanine phosphoribosyltransferase, found in Vibrio campbellii (strain ATCC BAA-1116).